We begin with the raw amino-acid sequence, 174 residues long: NADH-ubiquinone oxidoreductase chain 6 (174 aa).

6 helical membrane passes run 1–21, 24–44, 47–67, 86–106, 111–131, and 151–171; these read MTYALFLLSVILVMGFVGFSS, SPIYGGLVLIISGAVGCAVIL, GGGYMGLMVFLIYLGGMMVVF, VEVLVSVLVGLVMEVGLVLWV, GVVVVVNFNSVGSWMIYEGEG, and WLVVVTGWTLFVGVYVVIEIA.

It belongs to the complex I subunit 6 family. In terms of assembly, core subunit of respiratory chain NADH dehydrogenase (Complex I) which is composed of 45 different subunits.

The protein resides in the mitochondrion inner membrane. It carries out the reaction a ubiquinone + NADH + 5 H(+)(in) = a ubiquinol + NAD(+) + 4 H(+)(out). In terms of biological role, core subunit of the mitochondrial membrane respiratory chain NADH dehydrogenase (Complex I) which catalyzes electron transfer from NADH through the respiratory chain, using ubiquinone as an electron acceptor. Essential for the catalytic activity and assembly of complex I. This chain is NADH-ubiquinone oxidoreductase chain 6 (MT-ND6), found in Pongo abelii (Sumatran orangutan).